The following is a 350-amino-acid chain: Induced myeloid leukemia cell differentiation protein Mcl-1 (350 aa).

Glycyl lysine isopeptide (Lys-Gly) (interchain with G-Cter in ubiquitin) cross-links involve residues Lys5 and Lys40. The interval 47–87 is disordered; that stretch reads EIGGGEAGAVIGGSAGASPPSTLTPDSRRVARPPPIGAEVP. A compositionally biased stretch (gly residues) spans 50 to 61; that stretch reads GGEAGAVIGGSA. A PEST-like region spans residues 104–175; it reads RAAPLEEMEA…PAEEEEDELY (72 aa). Position 121 is a phosphoserine (Ser121). Lys136 is covalently cross-linked (Glycyl lysine isopeptide (Lys-Gly) (interchain with G-Cter in ubiquitin)). Positions 148–171 are disordered; that stretch reads GESGNNTSTDGSLPSTPPPAEEEE. Positions 150–161 are enriched in polar residues; that stretch reads SGNNTSTDGSLP. A Phosphoserine; by GSK3-alpha and GSK3-beta modification is found at Ser159. Phosphoserine is present on Ser162. Residue Thr163 is modified to Phosphothreonine; by MAPK. Glycyl lysine isopeptide (Lys-Gly) (interchain with G-Cter in ubiquitin) cross-links involve residues Lys194 and Lys197. The BH3 motif lies at 209-223; the sequence is ALETLRRVGDGVQRN. The BH1 signature appears at 252 to 272; sequence HVFSDGVTNWGRIVTLISFGA. Positions 304-319 match the BH2 motif; it reads DWLVKQRGWDGFVEFF. Residues 328–348 traverse the membrane as a helical segment; it reads IRNVLLAFAGVAGVGAGLAYL.

Belongs to the Bcl-2 family. In terms of assembly, interacts with HIF3A (via C-terminus domain). Interacts with BAD, BOK, BIK and BMF. Interacts with PMAIP1. Interacts with BBC3. Isoform 1 interacts with BAX, BAK1 and TPT1. Heterodimer of isoform 1 and isoform 2. Homodimers of isoform 1 or isoform 2 are not detected. Isoform 2 does not interact with pro-apoptotic BCL2-related proteins. Interacts with RTL10/BOP. Interacts with BCL2L11; may sequester BCL2L11 to prevent its pro-apoptotic activity. Interacts with GIMAP5 and HSPA8/HSC70; the interaction between HSPA8 and MCL1 is impaired in the absence of GIMAP5. In terms of processing, cleaved by CASP3 during apoptosis. In intact cells cleavage occurs preferentially after Asp-127, yielding a pro-apoptotic 28 kDa C-terminal fragment. Post-translationally, rapidly degraded in the absence of phosphorylation on Thr-163 in the PEST region. Phosphorylated on Ser-159, by GSK3, in response to IL3/interleukin-3 withdrawal. Phosphorylation at Ser-159 induces ubiquitination and proteasomal degradation, abrogating the anti-apoptotic activity. Treatment with taxol or okadaic acid induces phosphorylation on additional sites. In terms of processing, ubiquitinated. Ubiquitination is induced by phosphorylation at Ser-159. Deubiquitinated by USP20; leading to increased stability.

The protein localises to the membrane. It localises to the cytoplasm. Its subcellular location is the mitochondrion. It is found in the nucleus. The protein resides in the nucleoplasm. Involved in the regulation of apoptosis versus cell survival, and in the maintenance of viability but not of proliferation. Mediates its effects by interactions with a number of other regulators of apoptosis. Isoform 1 inhibits apoptosis. Isoform 2 promotes apoptosis. The polypeptide is Induced myeloid leukemia cell differentiation protein Mcl-1 (MCL1) (Homo sapiens (Human)).